The sequence spans 1213 residues: uncharacterized protein (1213 aa).

Positions 289 to 390 (ATKRQGWLLR…WGSVINNARE (102 aa)) constitute a PH domain. A VASt domain is found at 776–945 (LDDIVFDRVY…EVNFLEKATR (170 aa)). The next 2 membrane-spanning stretches (helical) occupy residues 996–1016 (LFLQGLAIDLLKLPWAVFHIF) and 1025–1045 (FLVIIFACSVILNLSLMFCFG).

Its subcellular location is the cytoplasm. It is found in the nucleus membrane. It localises to the cytoskeleton. The protein resides in the microtubule organizing center. The protein localises to the spindle pole body. This is an uncharacterized protein from Schizosaccharomyces pombe (strain 972 / ATCC 24843) (Fission yeast).